The following is a 280-amino-acid chain: Phosphatidylglycerol--prolipoprotein diacylglyceryl transferase (280 aa).

4 helical membrane passes run 12 to 32 (FGPF…LIGL), 52 to 72 (LLPL…VAFE), 86 to 106 (IWEG…TLIL), and 115 to 133 (FWDV…QSIG). Arg134 lines the a 1,2-diacyl-sn-glycero-3-phospho-(1'-sn-glycerol) pocket. The next 3 membrane-spanning stretches (helical) occupy residues 173-193 (PTFL…ILLF), 203-223 (LPAG…RVWI), and 246-266 (IAQL…WWLY).

It belongs to the Lgt family.

The protein resides in the cell inner membrane. The enzyme catalyses L-cysteinyl-[prolipoprotein] + a 1,2-diacyl-sn-glycero-3-phospho-(1'-sn-glycerol) = an S-1,2-diacyl-sn-glyceryl-L-cysteinyl-[prolipoprotein] + sn-glycerol 1-phosphate + H(+). It participates in protein modification; lipoprotein biosynthesis (diacylglyceryl transfer). In terms of biological role, catalyzes the transfer of the diacylglyceryl group from phosphatidylglycerol to the sulfhydryl group of the N-terminal cysteine of a prolipoprotein, the first step in the formation of mature lipoproteins. The chain is Phosphatidylglycerol--prolipoprotein diacylglyceryl transferase from Synechococcus sp. (strain CC9902).